The following is a 382-amino-acid chain: MSISIYEFFHYSLFLGLFVAFTYNKKQPPAFGAALAFWCILLSFLGLLFCHISNNLSNYNVLTANALFFYQISGTWSNHEGSILLWCWILNFYGFFFCYRGRPQSHNVLKQGGYRESLFFFFVLNFVKNSILSLLRYEQESGLKNQLYTPFVLRTLVDSELCSRRNRTFDGPALFYAPLYPERKIKNPLDAWRFRGSREGKRTHPLLHLARDDKERASSIDEQRIDGALGIALFFSFFLLASSDPFVRNFFVCTEPLAELNPVLQDPILAIHPPCIYAGDVASAEGFGLCRSKMMNGIVALHSPPMRKDAAEKNGTLLCSAGCVGSRITSELFTLKFKHVGAKCYPALLLRSNRSPLMLLRRRFFAFSSFWAGARSHSTKRY.

4 helical membrane-spanning segments follow: residues 1 to 21 (MSIS…FVAF), 30 to 50 (AFGA…LLFC), 79 to 99 (HEGS…FFCY), and 117 to 137 (SLFF…LLRY).

Belongs to the CcmF/CycK/Ccl1/NrfE/CcsA family. Interacts with CCMFN2 and CCMH.

Its subcellular location is the mitochondrion inner membrane. In terms of biological role, forms a complex with CCMFC, CCMFN2 and CCMH that performs the assembly of heme with c-type apocytochromes in mitochondria. The sequence is that of Cytochrome c biogenesis CcmF N-terminal-like mitochondrial protein 1 from Arabidopsis thaliana (Mouse-ear cress).